The following is a 548-amino-acid chain: Rhotekin (548 aa).

The REM-1 domain occupies 10–85 (DLNMLYIRQM…LQRRKEAQVL (76 aa)). Ser-22 and Ser-93 each carry phosphoserine. Positions 83 to 103 (QVLGKTGRRPSDSVQPPERSP) are disordered. The residue at position 217 (Arg-217) is an Asymmetric dimethylarginine. Ser-219 is subject to Phosphoserine. One can recognise a PH domain in the interval 296 to 403 (QPTASGTLRV…WMEALWQLFL (108 aa)). Phosphoserine occurs at positions 504, 513, and 528. Residues 506 to 548 (DAVPADHSLGPSRSVAPLPPQRSPQSRGFYSKSQLSTWLQSPV) are disordered. The segment covering 528 to 548 (SPQSRGFYSKSQLSTWLQSPV) has biased composition (polar residues).

In terms of assembly, interacts via its C-terminal region with the TAX1BP3 PDZ domain. This interaction facilitates Rho-mediated activation of the c-Fos serum response element (SRE). Interacts with SEPT9. Specifically binds to GTP-bound RHOA, RHOB and RHOC and inhibits their GTPase activity.

Mediates Rho signaling to activate NF-kappa-B and may confer increased resistance to apoptosis to cells in gastric tumorigenesis. May play a novel role in the organization of septin structures. The protein is Rhotekin of Rattus norvegicus (Rat).